The sequence spans 255 residues: Tablysin 15 (255 aa).

The first 23 residues, 1–23 (MTSIPVSSFLLAALVLQYATSDA), serve as a signal peptide directing secretion. Cystine bridges form between C27-C40, C31-C117, and C49-C110. The Cell attachment site signature appears at 32–34 (RGD). One can recognise an SCP domain in the interval 67 to 211 (LSKINDVRDH…KARALLTCNF (145 aa)). Leukotriene E4 contacts are provided by W82, H153, and K156. Intrachain disulfides connect C192-C209 and C232-C243.

This sequence belongs to the CRISP family. As to expression, expressed in salivary glands.

Its subcellular location is the secreted. In terms of biological role, anti-inflammatory scavenger of eicosanoids and antithrombotic protein that inhibits platelets aggregation induced by collagen, ADP and convulxin (GPVI agonist). Exhibits high affinity binding for glycoprotein IIb-IIIa receptor (ITGA2B/ITGB3) and endothelial cell alphaVbeta3 (ITGAV/ITGB3) integrins, but not for alpha-5/beta-1 or alpha-2/beta-1. Accordingly, it blocks endothelial cell adhesion to vitronectin (IC(50)~1 nM) and marginally to fibronectin (IC(50)~1 uM), but not to collagen. It also inhibits fibroblast growth factor (FGF)-induced endothelial cell proliferation, and attenuates tube formation in vitro. In addition, it dose-dependently attenuates thrombus formation to collagen under flow. Also binds proinflammatory cysteinyl leukotrienes (leukotrienes C4 (LTC4), D4 (LTD4) and E4 (LTE4)) with submicromolar affinities. This Tabanus yao (Horsefly) protein is Tablysin 15.